Here is a 135-residue protein sequence, read N- to C-terminus: Small ribosomal subunit protein bS6 (135 aa).

The segment at 104-135 (FSRLDRNGHIGHDEKHPRSPSRQREDVIEGVE) is disordered.

This sequence belongs to the bacterial ribosomal protein bS6 family.

Its function is as follows. Binds together with bS18 to 16S ribosomal RNA. In Bartonella henselae (strain ATCC 49882 / DSM 28221 / CCUG 30454 / Houston 1) (Rochalimaea henselae), this protein is Small ribosomal subunit protein bS6.